A 326-amino-acid polypeptide reads, in one-letter code: Flap endonuclease 1 (326 aa).

Residues methionine 1–arginine 100 form an N-domain region. The Mg(2+) site is built by aspartate 28, aspartate 82, glutamate 154, glutamate 156, aspartate 175, aspartate 177, and aspartate 225. The interval alanine 118 to glycine 246 is I-domain. Residues valine 318–isoleucine 326 are interaction with PCNA.

Belongs to the XPG/RAD2 endonuclease family. FEN1 subfamily. As to quaternary structure, interacts with PCNA. PCNA stimulates the nuclease activity without altering cleavage specificity. The cofactor is Mg(2+).

In terms of biological role, structure-specific nuclease with 5'-flap endonuclease and 5'-3' exonuclease activities involved in DNA replication and repair. During DNA replication, cleaves the 5'-overhanging flap structure that is generated by displacement synthesis when DNA polymerase encounters the 5'-end of a downstream Okazaki fragment. Binds the unpaired 3'-DNA end and kinks the DNA to facilitate 5' cleavage specificity. Cleaves one nucleotide into the double-stranded DNA from the junction in flap DNA, leaving a nick for ligation. Also involved in the base excision repair (BER) pathway. Acts as a genome stabilization factor that prevents flaps from equilibrating into structures that lead to duplications and deletions. Also possesses 5'-3' exonuclease activity on nicked or gapped double-stranded DNA. In Haloquadratum walsbyi (strain DSM 16790 / HBSQ001), this protein is Flap endonuclease 1.